Here is a 423-residue protein sequence, read N- to C-terminus: Glucose-1-phosphate adenylyltransferase (423 aa).

Residues Tyr112, Gly177, 192–193, and Ser210 each bind alpha-D-glucose 1-phosphate; that span reads EK.

The protein belongs to the bacterial/plant glucose-1-phosphate adenylyltransferase family. As to quaternary structure, homotetramer.

The catalysed reaction is alpha-D-glucose 1-phosphate + ATP + H(+) = ADP-alpha-D-glucose + diphosphate. The protein operates within glycan biosynthesis; glycogen biosynthesis. In terms of biological role, involved in the biosynthesis of ADP-glucose, a building block required for the elongation reactions to produce glycogen. Catalyzes the reaction between ATP and alpha-D-glucose 1-phosphate (G1P) to produce pyrophosphate and ADP-Glc. The sequence is that of Glucose-1-phosphate adenylyltransferase from Rhodospirillum rubrum (strain ATCC 11170 / ATH 1.1.1 / DSM 467 / LMG 4362 / NCIMB 8255 / S1).